The following is an 803-amino-acid chain: Pesticidal crystal protein Cry13Aa (803 aa).

The protein belongs to the delta endotoxin family.

Functionally, endotoxin with nematicidal activity. This is Pesticidal crystal protein Cry13Aa (cry13Aa) from Bacillus thuringiensis.